The following is a 525-amino-acid chain: Probable pectinesterase/pectinesterase inhibitor 44 (525 aa).

The signal sequence occupies residues 1–19 (MSCLKYFLILLMLGLCVSS). A pectinesterase inhibitor 44 region spans residues 30-153 (VPASEFVSSI…YSMLRELLPL (124 aa)). Residue Asn98 is glycosylated (N-linked (GlcNAc...) asparagine). A disordered region spans residues 157 to 192 (EQKPKAVSKPGPIAKGPKAPPGRKLRDTDEDESLQF). The tract at residues 212–509 (DVSVALDGTG…FTVSQFIKGN (298 aa)) is pectinesterase 44. Residues Asn222 and Asn278 are each glycosylated (N-linked (GlcNAc...) asparagine). The substrate site is built by Thr287 and Gln317. The Proton donor; for pectinesterase activity role is filled by Asp340. A disulfide bridge connects residues Cys354 and Cys374. Asp361 functions as the Nucleophile; for pectinesterase activity in the catalytic mechanism. Asn409 and Asn421 each carry an N-linked (GlcNAc...) asparagine glycan. Positions 429 and 431 each coordinate substrate. Residues Asn443, Asn492, and Asn499 are each glycosylated (N-linked (GlcNAc...) asparagine).

In the N-terminal section; belongs to the PMEI family. This sequence in the C-terminal section; belongs to the pectinesterase family. In terms of tissue distribution, expressed in siliques.

It localises to the secreted. The protein localises to the cell wall. The enzyme catalyses [(1-&gt;4)-alpha-D-galacturonosyl methyl ester](n) + n H2O = [(1-&gt;4)-alpha-D-galacturonosyl](n) + n methanol + n H(+). It functions in the pathway glycan metabolism; pectin degradation; 2-dehydro-3-deoxy-D-gluconate from pectin: step 1/5. Acts in the modification of cell walls via demethylesterification of cell wall pectin. This Arabidopsis thaliana (Mouse-ear cress) protein is Probable pectinesterase/pectinesterase inhibitor 44 (PME44).